The chain runs to 467 residues: Dihydrolipoyl dehydrogenase (467 aa).

Residues 33 to 41 (EPKYWGGIC), Lys50, and Gly113 contribute to the FAD site. A disulfide bridge links Cys41 with Cys46. NAD(+)-binding positions include 181–185 (GAGAI), Glu204, and 269–272 (AIGF). Asp312 and Ala320 together coordinate FAD. His446 serves as the catalytic Proton acceptor.

It belongs to the class-I pyridine nucleotide-disulfide oxidoreductase family. As to quaternary structure, homodimer. Part of the PDH complex, consisting of multiple copies of AceE (E1), DlaT (E2) and Lpd (E3), and of the BCKADH complex, consisting of multiple copies of BkdA/BkdB (E1), BkdC (E2) and Lpd (E3). The cofactor is FAD.

The protein resides in the cytoplasm. It carries out the reaction N(6)-[(R)-dihydrolipoyl]-L-lysyl-[protein] + NAD(+) = N(6)-[(R)-lipoyl]-L-lysyl-[protein] + NADH + H(+). Lipoamide dehydrogenase is a component of the alpha-ketoacid dehydrogenase complexes. Catalyzes the reoxidation of dihydrolipoyl groups which are covalently attached to the lipoate acyltransferase components (E2) of the complexes. This Mycobacterium leprae (strain TN) protein is Dihydrolipoyl dehydrogenase (lpd).